Consider the following 411-residue polypeptide: Dual-specificity RNA methyltransferase RlmN (411 aa).

Glutamate 125 functions as the Proton acceptor in the catalytic mechanism. The Radical SAM core domain occupies 131 to 380 (EEGRGTLCIS…IRTPRGRDIL (250 aa)). Cysteine 138 and cysteine 383 form a disulfide bridge. Cysteine 145, cysteine 149, and cysteine 152 together coordinate [4Fe-4S] cluster. Residues 209-210 (GE), serine 241, 263-265 (SLH), and asparagine 340 each bind S-adenosyl-L-methionine. Cysteine 383 (S-methylcysteine intermediate) is an active-site residue.

Belongs to the radical SAM superfamily. RlmN family. It depends on [4Fe-4S] cluster as a cofactor.

Its subcellular location is the cytoplasm. The enzyme catalyses adenosine(2503) in 23S rRNA + 2 reduced [2Fe-2S]-[ferredoxin] + 2 S-adenosyl-L-methionine = 2-methyladenosine(2503) in 23S rRNA + 5'-deoxyadenosine + L-methionine + 2 oxidized [2Fe-2S]-[ferredoxin] + S-adenosyl-L-homocysteine. It carries out the reaction adenosine(37) in tRNA + 2 reduced [2Fe-2S]-[ferredoxin] + 2 S-adenosyl-L-methionine = 2-methyladenosine(37) in tRNA + 5'-deoxyadenosine + L-methionine + 2 oxidized [2Fe-2S]-[ferredoxin] + S-adenosyl-L-homocysteine. Specifically methylates position 2 of adenine 2503 in 23S rRNA and position 2 of adenine 37 in tRNAs. m2A2503 modification seems to play a crucial role in the proofreading step occurring at the peptidyl transferase center and thus would serve to optimize ribosomal fidelity. The polypeptide is Dual-specificity RNA methyltransferase RlmN (Brucella suis biovar 1 (strain 1330)).